The sequence spans 318 residues: NAD kinase (318 aa).

The active-site Proton acceptor is the D84. NAD(+) is bound by residues 84-85 (DG), R89, 159-160 (NE), R170, D189, and 200-205 (TAYAFS).

It belongs to the NAD kinase family. Requires a divalent metal cation as cofactor.

The protein localises to the cytoplasm. It catalyses the reaction NAD(+) + ATP = ADP + NADP(+) + H(+). Functionally, involved in the regulation of the intracellular balance of NAD and NADP, and is a key enzyme in the biosynthesis of NADP. Catalyzes specifically the phosphorylation on 2'-hydroxyl of the adenosine moiety of NAD to yield NADP. This is NAD kinase from Cutibacterium acnes (strain DSM 16379 / KPA171202) (Propionibacterium acnes).